A 1558-amino-acid chain; its full sequence is Hybrid PKS-NRPS synthetase TAS1 (1558 aa).

The tract at residues 27–392 is condensation (C) domain; sequence YPMTKAQESL…RGLETPRAQV (366 aa). The tract at residues 522 to 919 is adenylation (A) domain; that stretch reads TYKELNERSN…TITDVMPEVT (398 aa). The interval 995–1028 is disordered; the sequence is TSGSSSSATPSLVSSGSTTCRSPSTSSCSDSRSA. Residues 1027–1104 enclose the Carrier domain; the sequence is SASPAITSAV…GQVDLLCGSE (78 aa). The residue at position 1063 (S1063) is an O-(pantetheine 4'-phosphoryl)serine. The interval 1116–1144 is disordered; sequence LGRGRTKSPAKIVDSQGRSSPSTIPSGGR. A compositionally biased stretch (polar residues) spans 1131–1140; it reads QGRSSPSTIP. Positions 1145–1558 constitute a Ketosynthase family 3 (KS3) domain; the sequence is KSEIAIVGIS…GVNAHCVLRS (414 aa). Catalysis depends on for beta-ketoacyl synthase activity residues C1308, H1444, and N1484.

It in the N-terminal section; belongs to the NRP synthetase family. Requires pantetheine 4'-phosphate as cofactor.

It catalyses the reaction acetoacetyl-CoA + L-isoleucine + ATP = tenuazonic acid + AMP + diphosphate + CoA + 2 H(+). Functionally, hybrid PKS-NRPS synthetase that mediates the biosynthesis of the toxin tenuazonic acid (TeA), an inhibitor of protein biosynthesis on ribosomes by suppressing the release of new protein. TAS1 alone is sufficient for TeA synthesis via the condensation of isoleucine (Ile) with acetoacetyl-CoA by the N-terminal NRPS module and subsequent cyclization conducted by the C-terminal KS domain. This chain is Hybrid PKS-NRPS synthetase TAS1, found in Gloeophyllum trabeum (strain ATCC 11539 / FP-39264 / Madison 617) (Brown rot fungus).